Reading from the N-terminus, the 135-residue chain is Small ribosomal subunit protein uS9 (135 aa).

Over residues 108–118 the composition is skewed to basic and acidic residues; that stretch reads VGDPRRTEPHK. The disordered stretch occupies residues 108 to 135; sequence VGDPRRTEPHKPNRSTKGPRAKRQKSYR. Residues 119–135 show a composition bias toward basic residues; the sequence is PNRSTKGPRAKRQKSYR.

The protein belongs to the universal ribosomal protein uS9 family.

In Pyrococcus abyssi (strain GE5 / Orsay), this protein is Small ribosomal subunit protein uS9 (rps9).